The primary structure comprises 141 residues: Hemoglobin subunit alpha-A (141 aa).

The Globin domain maps to 1–141; sequence VLSANDKTNV…VGNVLSAKYR (141 aa). Position 58 (His-58) interacts with O2. His-87 lines the heme b pocket.

It belongs to the globin family. As to quaternary structure, heterotetramer of two alpha chains and two beta chains. As to expression, red blood cells.

In terms of biological role, involved in oxygen transport from the lung to the various peripheral tissues. The protein is Hemoglobin subunit alpha-A (HBAA) of Trigonoceps occipitalis (White-headed vulture).